The primary structure comprises 62 residues: Large ribosomal subunit protein uL30 (62 aa).

The protein belongs to the universal ribosomal protein uL30 family. Part of the 50S ribosomal subunit.

The protein is Large ribosomal subunit protein uL30 of Staphylococcus carnosus (strain TM300).